The following is a 720-amino-acid chain: Phosphatase and actin regulator 4 (720 aa).

Residues 1–48 (MGQPRFSRPVHPAAAAEEVDHPPSDAGMGVDVLESGDTTPPTKRKSKF) form a disordered region. The RPEL 1 repeat unit spans residues 74–99 (EVLERKISMRKPREELVKRGVLLEDP). 3 disordered regions span residues 294-417 (SGTG…GLPR), 454-568 (NDGF…DTLA), and 610-648 (RPTA…LSQR). Positions 346–368 (TYPPPSPSPPLPTHIPPEPPRMP) are enriched in pro residues. Residues 393–405 (KDFRSLEVSKRTA) are compositionally biased toward basic and acidic residues. Composition is skewed to acidic residues over residues 481–494 (DDEE…EEEQ), 521–534 (EEQE…DSDS), and 542–551 (DDEEDEEEDE). 2 RPEL repeats span residues 601 to 626 (TTLI…QPKN) and 639 to 664 (RRLT…RFNE). A compositionally biased stretch (basic and acidic residues) spans 626 to 636 (NEADRQAEKRE). Positions 637 to 646 (IKRRLTRKLS) are enriched in basic residues.

Belongs to the phosphatase and actin regulator family. As to quaternary structure, binds PPP1CA and actin.

The protein resides in the cytoplasm. The protein localises to the cell projection. It localises to the lamellipodium. In terms of biological role, regulator of protein phosphatase 1 (PP1) required for neural tube and optic fissure closure, and enteric neural crest cell (ENCCs) migration during development. Acts as an activator of PP1. During neural tube closure, localizes to the ventral neural tube and activates PP1, leading to down-regulate cell proliferation within cranial neural tissue and the neural retina. Also acts as a regulator of migration of enteric neural crest cells (ENCCs) by activating PP1, leading to repression of the integrin signaling through the RHO/ROCK pathway. In Gallus gallus (Chicken), this protein is Phosphatase and actin regulator 4 (PHACTR4).